A 105-amino-acid chain; its full sequence is V-type ATP synthase subunit F (105 aa).

Belongs to the V-ATPase F subunit family.

Produces ATP from ADP in the presence of a proton gradient across the membrane. The protein is V-type ATP synthase subunit F of Fusobacterium nucleatum subsp. nucleatum (strain ATCC 25586 / DSM 15643 / BCRC 10681 / CIP 101130 / JCM 8532 / KCTC 2640 / LMG 13131 / VPI 4355).